A 119-amino-acid polypeptide reads, in one-letter code: Ribonuclease P protein component (119 aa).

The protein belongs to the RnpA family. As to quaternary structure, consists of a catalytic RNA component (M1 or rnpB) and a protein subunit.

It carries out the reaction Endonucleolytic cleavage of RNA, removing 5'-extranucleotides from tRNA precursor.. In terms of biological role, RNaseP catalyzes the removal of the 5'-leader sequence from pre-tRNA to produce the mature 5'-terminus. It can also cleave other RNA substrates such as 4.5S RNA. The protein component plays an auxiliary but essential role in vivo by binding to the 5'-leader sequence and broadening the substrate specificity of the ribozyme. This chain is Ribonuclease P protein component, found in Aeromonas salmonicida (strain A449).